The chain runs to 83 residues: Large ribosomal subunit protein bL31B (83 aa).

This sequence belongs to the bacterial ribosomal protein bL31 family. Type B subfamily. As to quaternary structure, part of the 50S ribosomal subunit.

This chain is Large ribosomal subunit protein bL31B, found in Levilactobacillus brevis (strain ATCC 367 / BCRC 12310 / CIP 105137 / JCM 1170 / LMG 11437 / NCIMB 947 / NCTC 947) (Lactobacillus brevis).